We begin with the raw amino-acid sequence, 692 residues long: Methionine--tRNA ligase (692 aa).

The 'HIGH' region signature appears at 12-22 (PYANGSFHIGH). Zn(2+) contacts are provided by Cys143, Cys146, Cys156, and Cys159. The 'KMSKS' region signature appears at 341–345 (KMSKS). An ATP-binding site is contributed by Lys344. The tRNA-binding domain maps to 586–692 (DFAKIDLRIA…PGAQPGMRVR (107 aa)).

Belongs to the class-I aminoacyl-tRNA synthetase family. MetG type 1 subfamily. As to quaternary structure, homodimer. It depends on Zn(2+) as a cofactor.

It is found in the cytoplasm. It carries out the reaction tRNA(Met) + L-methionine + ATP = L-methionyl-tRNA(Met) + AMP + diphosphate. Functionally, is required not only for elongation of protein synthesis but also for the initiation of all mRNA translation through initiator tRNA(fMet) aminoacylation. In Bordetella pertussis (strain Tohama I / ATCC BAA-589 / NCTC 13251), this protein is Methionine--tRNA ligase.